A 244-amino-acid chain; its full sequence is UDP-2,3-diacylglucosamine hydrolase (244 aa).

5 residues coordinate Mn(2+): D8, H10, D41, N79, and H114. Substrate is bound at residue 79-80 (NR). Positions 122, 160, 164, 167, and 195 each coordinate substrate. Residues H195 and H197 each coordinate Mn(2+).

Belongs to the LpxH family. The cofactor is Mn(2+).

It is found in the cell inner membrane. It carries out the reaction UDP-2-N,3-O-bis[(3R)-3-hydroxytetradecanoyl]-alpha-D-glucosamine + H2O = 2-N,3-O-bis[(3R)-3-hydroxytetradecanoyl]-alpha-D-glucosaminyl 1-phosphate + UMP + 2 H(+). It functions in the pathway glycolipid biosynthesis; lipid IV(A) biosynthesis; lipid IV(A) from (3R)-3-hydroxytetradecanoyl-[acyl-carrier-protein] and UDP-N-acetyl-alpha-D-glucosamine: step 4/6. Its function is as follows. Hydrolyzes the pyrophosphate bond of UDP-2,3-diacylglucosamine to yield 2,3-diacylglucosamine 1-phosphate (lipid X) and UMP by catalyzing the attack of water at the alpha-P atom. Involved in the biosynthesis of lipid A, a phosphorylated glycolipid that anchors the lipopolysaccharide to the outer membrane of the cell. In Marinobacter nauticus (strain ATCC 700491 / DSM 11845 / VT8) (Marinobacter aquaeolei), this protein is UDP-2,3-diacylglucosamine hydrolase.